The primary structure comprises 71 residues: Long neurotoxin 1 (71 aa).

Intrachain disulfides connect C3/C20, C14/C41, C26/C30, C45/C56, and C57/C62.

This sequence belongs to the three-finger toxin family. Long-chain subfamily. Type II alpha-neurotoxin sub-subfamily. Expressed by the venom gland.

Its subcellular location is the secreted. In terms of biological role, binds with high affinity to muscular (alpha-1/CHRNA1) and neuronal (alpha-7/CHRNA7) nicotinic acetylcholine receptor (nAChR) and inhibits acetylcholine from binding to the receptor, thereby impairing neuromuscular and neuronal transmission. The chain is Long neurotoxin 1 from Naja nivea (Cape cobra).